We begin with the raw amino-acid sequence, 584 residues long: tRNA-guanine(15) transglycosylase (584 aa).

D95 (nucleophile) is an active-site residue. Substrate contacts are provided by D130 and G196. The Zn(2+) site is built by C279, C281, and C284. The PUA domain maps to 507 to 582 (RMRVVVSEEA…RAVKVRRGIS (76 aa)).

The protein belongs to the archaeosine tRNA-ribosyltransferase family. The cofactor is Zn(2+).

It carries out the reaction guanosine(15) in tRNA + 7-cyano-7-deazaguanine = 7-cyano-7-carbaguanosine(15) in tRNA + guanine. Its pathway is tRNA modification; archaeosine-tRNA biosynthesis. Exchanges the guanine residue with 7-cyano-7-deazaguanine (preQ0) at position 15 in the dihydrouridine loop (D-loop) of archaeal tRNAs. In Pyrococcus abyssi (strain GE5 / Orsay), this protein is tRNA-guanine(15) transglycosylase.